The following is a 415-amino-acid chain: Serine--tRNA ligase (415 aa).

231 to 233 (TAE) contacts L-serine. 262–264 (RSE) serves as a coordination point for ATP. Glu-285 is a binding site for L-serine. Position 349 to 352 (349 to 352 (EISS)) interacts with ATP. Ser-383 is an L-serine binding site.

Belongs to the class-II aminoacyl-tRNA synthetase family. Type-1 seryl-tRNA synthetase subfamily. As to quaternary structure, homodimer. The tRNA molecule binds across the dimer.

The protein localises to the cytoplasm. The enzyme catalyses tRNA(Ser) + L-serine + ATP = L-seryl-tRNA(Ser) + AMP + diphosphate + H(+). It catalyses the reaction tRNA(Sec) + L-serine + ATP = L-seryl-tRNA(Sec) + AMP + diphosphate + H(+). The protein operates within aminoacyl-tRNA biosynthesis; selenocysteinyl-tRNA(Sec) biosynthesis; L-seryl-tRNA(Sec) from L-serine and tRNA(Sec): step 1/1. Its function is as follows. Catalyzes the attachment of serine to tRNA(Ser). Is also able to aminoacylate tRNA(Sec) with serine, to form the misacylated tRNA L-seryl-tRNA(Sec), which will be further converted into selenocysteinyl-tRNA(Sec). In Helicobacter acinonychis (strain Sheeba), this protein is Serine--tRNA ligase.